The chain runs to 475 residues: Aspartyl/glutamyl-tRNA(Asn/Gln) amidotransferase subunit B (475 aa).

It belongs to the GatB/GatE family. GatB subfamily. Heterotrimer of A, B and C subunits.

The enzyme catalyses L-glutamyl-tRNA(Gln) + L-glutamine + ATP + H2O = L-glutaminyl-tRNA(Gln) + L-glutamate + ADP + phosphate + H(+). It catalyses the reaction L-aspartyl-tRNA(Asn) + L-glutamine + ATP + H2O = L-asparaginyl-tRNA(Asn) + L-glutamate + ADP + phosphate + 2 H(+). Functionally, allows the formation of correctly charged Asn-tRNA(Asn) or Gln-tRNA(Gln) through the transamidation of misacylated Asp-tRNA(Asn) or Glu-tRNA(Gln) in organisms which lack either or both of asparaginyl-tRNA or glutaminyl-tRNA synthetases. The reaction takes place in the presence of glutamine and ATP through an activated phospho-Asp-tRNA(Asn) or phospho-Glu-tRNA(Gln). The polypeptide is Aspartyl/glutamyl-tRNA(Asn/Gln) amidotransferase subunit B (Staphylococcus aureus (strain COL)).